Reading from the N-terminus, the 237-residue chain is DNA repair protein RecO (237 aa).

The protein belongs to the RecO family.

In terms of biological role, involved in DNA repair and RecF pathway recombination. In Actinobacillus succinogenes (strain ATCC 55618 / DSM 22257 / CCUG 43843 / 130Z), this protein is DNA repair protein RecO.